A 380-amino-acid chain; its full sequence is Chaperone protein DnaJ (380 aa).

Positions 5 to 69 (DFYEVLGVGR…QKKAAYDQYG (65 aa)) constitute a J domain. The segment at 135 to 213 (GCSKEIRVPT…CHGQGRVEKT (79 aa)) adopts a CR-type zinc-finger fold. 8 residues coordinate Zn(2+): Cys-148, Cys-151, Cys-165, Cys-168, Cys-187, Cys-190, Cys-201, and Cys-204. 4 CXXCXGXG motif repeats span residues 148 to 155 (CDSCDGSG), 165 to 172 (CGTCHGQG), 187 to 194 (CPHCHGRG), and 201 to 208 (CNSCHGQG).

Belongs to the DnaJ family. Homodimer. The cofactor is Zn(2+).

It localises to the cytoplasm. Its function is as follows. Participates actively in the response to hyperosmotic and heat shock by preventing the aggregation of stress-denatured proteins and by disaggregating proteins, also in an autonomous, DnaK-independent fashion. Unfolded proteins bind initially to DnaJ; upon interaction with the DnaJ-bound protein, DnaK hydrolyzes its bound ATP, resulting in the formation of a stable complex. GrpE releases ADP from DnaK; ATP binding to DnaK triggers the release of the substrate protein, thus completing the reaction cycle. Several rounds of ATP-dependent interactions between DnaJ, DnaK and GrpE are required for fully efficient folding. Also involved, together with DnaK and GrpE, in the DNA replication of plasmids through activation of initiation proteins. The sequence is that of Chaperone protein DnaJ from Photobacterium profundum (strain SS9).